The following is a 329-amino-acid chain: Calcium homeostasis modulator protein (329 aa).

The Cytoplasmic segment spans residues 1–14 (MTTSINSVVTVFQN). The helical transmembrane segment at 15-35 (VFTNHGSTLLNGILIATTVGG) threads the bilayer. At 36-53 (QSLVRKLTFSCPCAYPLN) the chain is on the extracellular side. A helical transmembrane segment spans residues 54-74 (IYHSLVFMFGPTAALLLIGIT). The Cytoplasmic segment spans residues 75–103 (VNSTTWKLAHGFFFRVRDTRHSWKTTCVS). Residues 104 to 124 (WIEVLIQSSVAPIAWLFVVFL) traverse the membrane as a helical segment. Over 125–191 (DGGYYRCYRS…DASYLEAESQ (67 aa)) the chain is Extracellular. N148 carries N-linked (GlcNAc...) asparagine glycosylation. The chain crosses the membrane as a helical span at residues 192–212 (IYAWGLLLFSGVAAFLVITCN). The Cytoplasmic segment spans residues 213 to 329 (RMCDKYTLVQ…QIIVDETKED (117 aa)).

It belongs to the CALHM family. Expressed in head and body wall muscles, IL2, ASG, ASI, ASJ, PHA and PHB sensory neurons, and spermatheca.

It is found in the cell membrane. In terms of biological role, pore-forming subunit of a voltage-gated ion channel. Permeable to monovalent cations, divalent cations and anions with selectivity Ca(2+) &gt; Mg(2+) &gt; Na(+) = K(+) &gt; Cl(-). Acts both as a voltage-gated and calcium-activated ion channel. Required for normal locomotion. This chain is Calcium homeostasis modulator protein, found in Caenorhabditis elegans.